Reading from the N-terminus, the 164-residue chain is Interleukin-10 (164 aa).

The N-terminal stretch at 1–18 is a signal peptide; the sequence is MPSSALLCCLIFLARVAA. Disulfide bonds link Cys30–Cys126 and Cys80–Cys132. Asn134 is a glycosylation site (N-linked (GlcNAc...) asparagine).

Belongs to the IL-10 family. In terms of assembly, homodimer. Interacts with IL10RA and IL10RB.

It is found in the secreted. Functionally, major immune regulatory cytokine that acts on many cells of the immune system where it has profound anti-inflammatory functions, limiting excessive tissue disruption caused by inflammation. Mechanistically, IL10 binds to its heterotetrameric receptor comprising IL10RA and IL10RB leading to JAK1 and STAT2-mediated phosphorylation of STAT3. In turn, STAT3 translocates to the nucleus where it drives expression of anti-inflammatory mediators. Targets antigen-presenting cells (APCs) such as macrophages and monocytes and inhibits their release of pro-inflammatory cytokines including granulocyte-macrophage colony-stimulating factor /GM-CSF, granulocyte colony-stimulating factor/G-CSF, IL-1 alpha, IL-1 beta, IL-6, IL-8 and TNF-alpha. Also interferes with antigen presentation by reducing the expression of MHC-class II and co-stimulatory molecules, thereby inhibiting their ability to induce T cell activation. In addition, controls the inflammatory response of macrophages by reprogramming essential metabolic pathways including mTOR signaling. The chain is Interleukin-10 (IL10) from Orcinus orca (Killer whale).